Here is a 507-residue protein sequence, read N- to C-terminus: RNA polymerase I-specific transcription initiation factor RRN11 (507 aa).

The segment covering 37–47 (KSTTTDSLPTP) has biased composition (polar residues). Disordered stretches follow at residues 37-76 (KSTT…LQQK) and 89-124 (GEIY…SDEE). A compositionally biased stretch (acidic residues) spans 97 to 108 (SETDSQEEETEE). Residues 109 to 124 (GGEHDTGIDKEDSDEE) show a composition bias toward basic and acidic residues.

Component of the core factor (CF) complex, which consists of RRN6, RRN7 and RRN11. The CF heterotrimer may further dimerize to form a hexamer. RRN11 interacts with RRN6, RRN7 and SPT15.

It is found in the nucleus. It localises to the nucleolus. Functionally, acts as a component of the core factor (CF) complex which is essential for the initiation of rDNA transcription by RNA polymerase I. After binding of UAF (upstream activation factor) to an upstream element of the promoter, CF is recruited in a SPT15/TBP-dependent manner to form a preinitiation complex. The chain is RNA polymerase I-specific transcription initiation factor RRN11 (RRN11) from Saccharomyces cerevisiae (strain ATCC 204508 / S288c) (Baker's yeast).